The chain runs to 390 residues: MSGNTIGKLFCVTSFGESHGPAIGCIVDGCPPGLVLSAMDIQLELDRRKPGTSRHVTQRHEGDRVEILSGVFDNITTGTPIALLIRNEDQRSKDYSKIMDVFRPGHADYTYWQKYGIRDYRGGGRSSARETAVRVAAGAIAKKWLHERYGIVIRGYMAQLGPIAIPFKNWEVINQNPFFVADDDYVPKLEAFMDALRKSGDSAGARINVIAEGVPVGWGEPVYDRLDADIAYAMMSINAAKGVEIGAGFNSVTQKGTEHSDEITPEGFLSNNAGGILGGISSSQPITVSVAIKPTSSIRLGRRSIDKAGNPVIVETHGRHDPCVGIRATPIVEAMLAIVLMDHALRHRGQNEDVVCTTPKVPGNIINPTNPVTTQPDVRRAEDPEPDENS.

The NADP(+) site is built by R48 and R54. Residues 125-127, 238-239, G278, 293-297, and R319 contribute to the FMN site; these read RSS, NA, and KPTSS. Residues 360-390 are disordered; sequence KVPGNIINPTNPVTTQPDVRRAEDPEPDENS. Polar residues predominate over residues 366-376; sequence INPTNPVTTQP.

The protein belongs to the chorismate synthase family. As to quaternary structure, homotetramer. FMNH2 is required as a cofactor.

The catalysed reaction is 5-O-(1-carboxyvinyl)-3-phosphoshikimate = chorismate + phosphate. It participates in metabolic intermediate biosynthesis; chorismate biosynthesis; chorismate from D-erythrose 4-phosphate and phosphoenolpyruvate: step 7/7. Its function is as follows. Catalyzes the anti-1,4-elimination of the C-3 phosphate and the C-6 proR hydrogen from 5-enolpyruvylshikimate-3-phosphate (EPSP) to yield chorismate, which is the branch point compound that serves as the starting substrate for the three terminal pathways of aromatic amino acid biosynthesis. This reaction introduces a second double bond into the aromatic ring system. This is Chorismate synthase from Nitrosomonas eutropha (strain DSM 101675 / C91 / Nm57).